A 341-amino-acid polypeptide reads, in one-letter code: Anthranilate phosphoribosyltransferase (341 aa).

5-phospho-alpha-D-ribose 1-diphosphate-binding positions include glycine 79, 82–83 (GD), threonine 87, 89–92 (NIST), 107–115 (KHGGRSVSS), and serine 119. Glycine 79 provides a ligand contact to anthranilate. Serine 91 lines the Mg(2+) pocket. Arginine 165 contacts anthranilate. Mg(2+) contacts are provided by aspartate 224 and glutamate 225.

Belongs to the anthranilate phosphoribosyltransferase family. Homodimer. It depends on Mg(2+) as a cofactor.

It catalyses the reaction N-(5-phospho-beta-D-ribosyl)anthranilate + diphosphate = 5-phospho-alpha-D-ribose 1-diphosphate + anthranilate. It functions in the pathway amino-acid biosynthesis; L-tryptophan biosynthesis; L-tryptophan from chorismate: step 2/5. Catalyzes the transfer of the phosphoribosyl group of 5-phosphorylribose-1-pyrophosphate (PRPP) to anthranilate to yield N-(5'-phosphoribosyl)-anthranilate (PRA). The chain is Anthranilate phosphoribosyltransferase from Ruminiclostridium cellulolyticum (strain ATCC 35319 / DSM 5812 / JCM 6584 / H10) (Clostridium cellulolyticum).